Reading from the N-terminus, the 34-residue chain is MSDIN-like toxin proprotein 3 (34 aa).

Residues 1-10 constitute a propeptide that is removed on maturation; sequence MSDINVIRAP. The segment at residues 11 to 18 is a cross-link (cyclopeptide (Leu-Pro)); it reads LLILSILP. The propeptide occupies 19–34; the sequence is CVGDDIEVLRRGEGLS.

It belongs to the MSDIN fungal toxin family. Processed by the macrocyclase-peptidase enzyme POPB to yield a toxic cyclic octapeptide. POPB first removes 10 residues from the N-terminus. Conformational trapping of the remaining peptide forces the enzyme to release this intermediate rather than proceed to macrocyclization. The enzyme rebinds the remaining peptide in a different conformation and catalyzes macrocyclization of the N-terminal 8 residues. As to expression, expressed in basidiocarps.

Probable toxin that belongs to the MSDIN-like toxin family responsible for a large number of food poisoning cases and deaths. The protein is MSDIN-like toxin proprotein 3 of Amanita exitialis (Guangzhou destroying angel).